The following is a 468-amino-acid chain: 3-isopropylmalate dehydratase large subunit (468 aa).

[4Fe-4S] cluster is bound by residues Cys-347, Cys-407, and Cys-410. Residues 424–441 (SASSSNRNFKGRQGSPSG) are compositionally biased toward polar residues. Positions 424–443 (SASSSNRNFKGRQGSPSGRT) are disordered.

The protein belongs to the aconitase/IPM isomerase family. LeuC type 1 subfamily. As to quaternary structure, heterodimer of LeuC and LeuD. It depends on [4Fe-4S] cluster as a cofactor.

The catalysed reaction is (2R,3S)-3-isopropylmalate = (2S)-2-isopropylmalate. It functions in the pathway amino-acid biosynthesis; L-leucine biosynthesis; L-leucine from 3-methyl-2-oxobutanoate: step 2/4. Functionally, catalyzes the isomerization between 2-isopropylmalate and 3-isopropylmalate, via the formation of 2-isopropylmaleate. The polypeptide is 3-isopropylmalate dehydratase large subunit (Prochlorococcus marinus (strain MIT 9215)).